A 469-amino-acid polypeptide reads, in one-letter code: RNA-editing ligase 1, mitochondrial (469 aa).

Residues 1-44 (MQLQRLGAPLLKRLVGGCIRQSTAPIMPCVVVSGSGGFLTPVRT) constitute a mitochondrion transit peptide. Residues 59-61 (IEI), 86-92 (EKVHGTN), asparagine 92, arginine 111, glutamate 159, phenylalanine 209, and 307-309 (KLR) each bind ATP. Lysine 87 serves as the catalytic N6-AMP-lysine intermediate. The interval 450–469 (AAAQSEAIPPLSPAAPTKGE) is disordered.

It belongs to the RNA ligase 2 family. In terms of assembly, component of the RNA editing complex (editosome), a 1600 kDa complex composed of at least 20 proteins. Interacts with terminal uridylyltransferase MEAT1.

The protein localises to the mitochondrion. It catalyses the reaction ATP + (ribonucleotide)n-3'-hydroxyl + 5'-phospho-(ribonucleotide)m = (ribonucleotide)n+m + AMP + diphosphate.. In terms of biological role, essential for RNA editing. RNA editing in kinetoplastid mitochondria inserts and deletes uridylates at multiple sites in pre-mRNAs as directed by guide RNAs. This is RNA-editing ligase 1, mitochondrial (REL1) from Trypanosoma brucei brucei (strain 927/4 GUTat10.1).